Reading from the N-terminus, the 99-residue chain is Plastocyanin A'/A'' (99 aa).

Residues 1–99 form the Plastocyanin-like domain; sequence IEVLLGSDDG…AGMVGKVTVN (99 aa). Cu cation contacts are provided by H37, C84, H87, and M92.

The protein belongs to the plastocyanin family. Requires Cu(2+) as cofactor.

The protein resides in the plastid. Its subcellular location is the chloroplast thylakoid membrane. Its function is as follows. Participates in electron transfer between P700 and the cytochrome b6-f complex in photosystem I. In Nicotiana tabacum (Common tobacco), this protein is Plastocyanin A'/A''.